Here is a 778-residue protein sequence, read N- to C-terminus: uncharacterized protein (778 aa).

Polar residues-rich tracts occupy residues 1–11 (MPISSPGTRCS), 18–34 (TLQQ…QSLG), and 41–51 (GSITENYVQDS). Positions 1-60 (MPISSPGTRCSSDLKDPTLQQYSAESVSTEQSLGTFEESKGSITENYVQDSSVDEHDDGN) are disordered. A run of 2 helical transmembrane segments spans residues 356-381 (YILM…APII) and 401-423 (GFLA…GAHI).

The protein belongs to the TMCO4 family.

It is found in the golgi apparatus membrane. This is an uncharacterized protein from Schizosaccharomyces pombe (strain 972 / ATCC 24843) (Fission yeast).